A 401-amino-acid chain; its full sequence is Subtilisin-like protease 7 (401 aa).

The signal sequence occupies residues 1 to 20; that stretch reads MGFITKAIPLALAAASVING. Residues 21 to 119 constitute a propeptide that is removed on maturation; the sequence is AEILETRAGV…IERDARVQIN (99 aa). One can recognise an Inhibitor I9 domain in the interval 36–118; sequence KYIVVMNDGM…YIERDARVQI (83 aa). N-linked (GlcNAc...) asparagine glycosylation occurs at N58. The Peptidase S8 domain occupies 129 to 401; it reads SWGLARVGSR…SKLINNGSGM (273 aa). Residues D161 and H193 each act as charge relay system in the active site. Residues N223 and N253 are each glycosylated (N-linked (GlcNAc...) asparagine). Residue S347 is the Charge relay system of the active site. Residue N397 is glycosylated (N-linked (GlcNAc...) asparagine).

The protein belongs to the peptidase S8 family.

It localises to the secreted. In terms of biological role, secreted subtilisin-like serine protease with keratinolytic activity that contributes to pathogenicity. The sequence is that of Subtilisin-like protease 7 (SUB7) from Trichophyton equinum (Horse ringworm fungus).